Consider the following 131-residue polypeptide: Outer membrane protein assembly factor BamE (131 aa).

The first 16 residues, 1-16 (MRNLLLVAAVALSTAG), serve as a signal peptide directing secretion. C17 carries N-palmitoyl cysteine lipidation. A lipid anchor (S-diacylglycerol cysteine) is attached at C17. The tract at residues 112–131 (SAPKQFGRNLARDKKKQRGR) is disordered.

This sequence belongs to the BamE family. Part of the Bam complex.

It is found in the cell outer membrane. Its function is as follows. Part of the outer membrane protein assembly complex, which is involved in assembly and insertion of beta-barrel proteins into the outer membrane. This is Outer membrane protein assembly factor BamE from Xanthomonas campestris pv. campestris (strain ATCC 33913 / DSM 3586 / NCPPB 528 / LMG 568 / P 25).